Consider the following 361-residue polypeptide: Queuine tRNA-ribosyltransferase (361 aa).

Aspartate 92 functions as the Proton acceptor in the catalytic mechanism. Substrate is bound by residues 92–96, aspartate 146, glutamine 189, and glycine 216; that span reads DSGGF. The interval 247-253 is RNA binding; the sequence is GVGKPAD. Aspartate 266 acts as the Nucleophile in catalysis. The RNA binding; important for wobble base 34 recognition stretch occupies residues 271–275; that stretch reads TRSGR. Positions 304, 306, 309, and 335 each coordinate Zn(2+).

The protein belongs to the queuine tRNA-ribosyltransferase family. In terms of assembly, homodimer. Within each dimer, one monomer is responsible for RNA recognition and catalysis, while the other monomer binds to the replacement base PreQ1. Zn(2+) serves as cofactor.

It carries out the reaction 7-aminomethyl-7-carbaguanine + guanosine(34) in tRNA = 7-aminomethyl-7-carbaguanosine(34) in tRNA + guanine. It functions in the pathway tRNA modification; tRNA-queuosine biosynthesis. Its function is as follows. Catalyzes the base-exchange of a guanine (G) residue with the queuine precursor 7-aminomethyl-7-deazaguanine (PreQ1) at position 34 (anticodon wobble position) in tRNAs with GU(N) anticodons (tRNA-Asp, -Asn, -His and -Tyr). Catalysis occurs through a double-displacement mechanism. The nucleophile active site attacks the C1' of nucleotide 34 to detach the guanine base from the RNA, forming a covalent enzyme-RNA intermediate. The proton acceptor active site deprotonates the incoming PreQ1, allowing a nucleophilic attack on the C1' of the ribose to form the product. After dissociation, two additional enzymatic reactions on the tRNA convert PreQ1 to queuine (Q), resulting in the hypermodified nucleoside queuosine (7-(((4,5-cis-dihydroxy-2-cyclopenten-1-yl)amino)methyl)-7-deazaguanosine). This is Queuine tRNA-ribosyltransferase from Rickettsia peacockii (strain Rustic).